Here is a 760-residue protein sequence, read N- to C-terminus: Ring-infected erythrocyte surface antigen (760 aa).

The segment at 214–300 is disordered; the sequence is DTSQEESVEE…SDVQQTSEAA (87 aa). Residues 216 to 230 are compositionally biased toward acidic residues; the sequence is SQEESVEENEEEHTV. Residues 231-242 show a composition bias toward basic and acidic residues; that stretch reads DDEHVEEHTADD. A compositionally biased stretch (acidic residues) spans 243–256; sequence EHVEEPTVADDEHV. Residues 262–288 are compositionally biased toward basic and acidic residues; that stretch reads ADEHVEEPTVAEEHVEEPTVAEEHVEE. In terms of domain architecture, J spans 307-375; that stretch reads DTLYYDILGV…KRWYNKYGYD (69 aa). N-linked (GlcNAc...) asparagine glycans are attached at residues Asn425, Asn559, and Asn563. Basic and acidic residues predominate over residues 683–692; it reads EHDAEENVEH. Residues 683–738 are disordered; that stretch reads EHDAEENVEHDAEENAEENVEENVEEVEENVEENVEENVGEKKMRREEKKKRVQEP. Positions 693 to 720 are enriched in acidic residues; the sequence is DAEENAEENVEENVEEVEENVEENVEEN.

The protein localises to the cell membrane. Its function is as follows. May disrupt the normal intermolecular interactions of the cytoplasmic domain of band 3 and thereby facilitate the invagination of the red cell membrane which is necessary for the formation of the parasitophorous vacuole. In Plasmodium falciparum (isolate NF7 / Ghana), this protein is Ring-infected erythrocyte surface antigen (RESA).